The primary structure comprises 368 residues: tRNA(Met) cytidine acetate ligase (368 aa).

ATP contacts are provided by residues 7 to 20 (IAEF…HKYL), G96, N152, and R175.

This sequence belongs to the TmcAL family.

It localises to the cytoplasm. The catalysed reaction is cytidine(34) in elongator tRNA(Met) + acetate + ATP = N(4)-acetylcytidine(34) in elongator tRNA(Met) + AMP + diphosphate. Catalyzes the formation of N(4)-acetylcytidine (ac(4)C) at the wobble position of elongator tRNA(Met), using acetate and ATP as substrates. First activates an acetate ion to form acetyladenylate (Ac-AMP) and then transfers the acetyl group to tRNA to form ac(4)C34. The protein is tRNA(Met) cytidine acetate ligase of Streptococcus pyogenes serotype M4 (strain MGAS10750).